Here is a 673-residue protein sequence, read N- to C-terminus: Probable urea active transporter 2 (673 aa).

14 helical membrane passes run 8-28 (GYGYGFALGLGAAFALLMAII), 83-103 (IMGGFMYGVGGTIQITLFLFL), 132-152 (VYLFYCISTNVLVSSLLLLGG), 164-184 (TVAACFLLPLGVMVYTTLGGL), 196-218 (VMIYIILIVTCYTVYCSSSLIGS), 249-269 (MMYLTWSVMIGGLSSVFGDPG), 287-307 (LMGGLCWWIIPMALGSSAGLA), 336-356 (IYGMASIFGKSGAAAGLVMLF), 391-411 (QLVRTAHLSVIGFSLFIGALS), 424-446 (LLTFLGIILTPEVSAVTLCLFWN), 451-471 (FSLVVGAPFGTITGVVCWLAS), 492-512 (FVGNIVSMASSPLYIVLLSYI), 559-579 (IGINLFILIGCYVIIPTALLG), and 592-612 (LIIVCLIWILVAAIYIILFPL).

Belongs to the sodium:solute symporter (SSF) (TC 2.A.21) family.

It localises to the endoplasmic reticulum membrane. Its function is as follows. Involved in active transport of urea. This chain is Probable urea active transporter 2 (dur3-2), found in Schizosaccharomyces pombe (strain 972 / ATCC 24843) (Fission yeast).